An 84-amino-acid chain; its full sequence is Kappa-scoloptoxin(11)-Ssm3a (84 aa).

The signal sequence occupies residues 1–16 (MSWMFYSFIVFTLAIK).

This sequence belongs to the scoloptoxin-11 family. Post-translationally, contains 2 disulfide bonds. As to expression, expressed by the venom gland.

It is found in the secreted. In terms of biological role, inhibits voltage-gated potassium channel currents in DRG neurons. 200 nM of the toxin inhibits current amplitude by only 25% and even at concentrations up to 5 uM, the toxin does not inhibit all potassium currents. In vivo, insects injected with this toxin showed signs of neurotoxicity including twitching, paralysis, and body contraction. The polypeptide is Kappa-scoloptoxin(11)-Ssm3a (Scolopendra mutilans (Chinese red-headed centipede)).